The chain runs to 3433 residues: Genome polyprotein (3433 aa).

The interaction with host EXOC1 stretch occupies residues Ser-2–Asn-15. Topologically, residues Ser-2–Arg-105 are cytoplasmic. The interval Leu-37–Val-72 is hydrophobic; homodimerization of capsid protein C. Positions Gly-106–Ala-123 are cleaved as a propeptide — ER anchor for the capsid protein C, removed in mature form by serine protease NS3. A helical transmembrane segment spans residues Gly-106 to Leu-126. At Ser-127 to Glu-248 the chain is on the extracellular side. A glycan (N-linked (GlcNAc...) asparagine; by host) is linked at Asn-138. The chain crosses the membrane as a helical span at residues Ser-249–Gly-269. The Cytoplasmic segment spans residues Ser-270–Met-273. A helical transmembrane segment spans residues Gln-274–Ser-290. Over Phe-291–Leu-743 the chain is Extracellular. Cystine bridges form between Cys-293–Cys-320, Cys-350–Cys-406, Cys-364–Cys-395, and Cys-382–Cys-411. Residues Asp-388–Gly-401 form a fusion peptide region. A glycan (N-linked (GlcNAc...) asparagine; by host) is linked at Asn-444. Cystine bridges form between Cys-480-Cys-578 and Cys-595-Cys-626. A helical transmembrane segment spans residues Phe-744–Ile-764. At Asn-765 to Ser-770 the chain is on the cytoplasmic side. A helical transmembrane segment spans residues Ile-771–Ala-791. Residues Asp-792 to Asp-1216 lie on the Extracellular side of the membrane. Intrachain disulfides connect Cys-795-Cys-806 and Cys-846-Cys-934. N-linked (GlcNAc...) asparagine; by host glycans are attached at residues Asn-921, Asn-966, and Asn-998. 4 disulfide bridges follow: Cys-970/Cys-1014, Cys-1071/Cys-1120, Cys-1082/Cys-1103, and Cys-1104/Cys-1107. Residues Val-1217–Phe-1237 form a helical membrane-spanning segment. Residues Leu-1238–Asn-1247 are Cytoplasmic-facing. A helical membrane pass occupies residues Ile-1248 to Leu-1268. Residues Leu-1269–Ala-1288 are Lumenal-facing. The chain crosses the membrane as a helical span at residues Ile-1289–Leu-1309. Residues Arg-1310–Val-1316 are Cytoplasmic-facing. Residues Tyr-1317–Ser-1335 traverse the membrane as a helical segment. Residues Ala-1336–Leu-1345 lie on the Lumenal side of the membrane. The helical transmembrane segment at Leu-1346–Val-1366 threads the bilayer. The Cytoplasmic portion of the chain corresponds to Ala-1367–Gly-1375. A helical transmembrane segment spans residues Trp-1376 to Ala-1396. Residues Glu-1397–Asp-1399 are Lumenal-facing. Residues Ile-1400–Ser-1420 traverse the membrane as a helical segment. At Gly-1421–Ala-1477 the chain is on the cytoplasmic side. The tract at residues Ile-1428–Ala-1467 is interacts with and activates NS3 protease. Residues Cys-1478–Ile-1498 constitute an intramembrane region (helical). At Thr-1499–Ala-2174 the chain is on the cytoplasmic side. Residues Gly-1506–Gly-1683 form the Peptidase S7 domain. Residues His-1556, Asp-1580, and Ser-1640 each act as charge relay system; for serine protease NS3 activity in the active site. In terms of domain architecture, Helicase ATP-binding spans Pro-1686 to Gln-1842. The important for RNA-binding stretch occupies residues Arg-1690–Gln-1693. Residue Leu-1699–Thr-1706 coordinates ATP. The DEAH box motif lies at Asp-1790–His-1793. In terms of domain architecture, Helicase C-terminal spans Gly-1853–Glu-2018. Lys-1894 bears the N6-acetyllysine; by host mark. Positions Glu-2169–Asp-2173 are regulates the ATPase activity of NS3 helicase. The chain crosses the membrane as a helical span at residues Leu-2175–Leu-2195. Over Met-2196–Gly-2200 the chain is Lumenal. An intramembrane region (helical) is located at residues Ile-2201 to Ala-2221. A topological domain (lumenal) is located at residue Glu-2222. A helical transmembrane segment spans residues Val-2223–Ile-2243. Residues Pro-2244–Ala-2258 lie on the Cytoplasmic side of the membrane. Residues Val-2259–Ala-2273 traverse the membrane as a helical segment. Topologically, residues Asn-2274–Ala-2312 are lumenal. Residues Thr-2313–Ile-2333 constitute an intramembrane region (helical). Topologically, residues Thr-2334–Thr-2380 are lumenal. The chain crosses the membrane as a helical span at residues Leu-2381–Gly-2401. Over Trp-2402–Lys-2444 the chain is Cytoplasmic. The helical transmembrane segment at Lys-2445–Val-2465 threads the bilayer. Residues Lys-2466–Glu-2470 are Lumenal-facing. Residues Ala-2471 to Trp-2491 form a helical membrane-spanning segment. Topologically, residues Asn-2492–Leu-3433 are cytoplasmic. The mRNA cap 0-1 NS5-type MT domain occupies Gly-2529 to Ala-2794. Ser-2584 is a binding site for S-adenosyl-L-methionine. A Phosphoserine modification is found at Ser-2584. Lys-2589 acts as the For 2'-O-MTase activity in catalysis. Residues Gly-2614, Trp-2615, Thr-2632, Lys-2633, Asp-2659, and Val-2660 each contribute to the S-adenosyl-L-methionine site. The For 2'-O-MTase activity role is filled by Asp-2674. Residue Ile-2675 coordinates S-adenosyl-L-methionine. Active-site for 2'-O-MTase activity residues include Lys-2710 and Glu-2746. Tyr-2748 serves as a coordination point for S-adenosyl-L-methionine. The Nuclear localization signal signature appears at Arg-2917 to Lys-2919. Positions 2968, 2972, 2977, and 2980 each coordinate Zn(2+). The RdRp catalytic domain occupies Gly-3058–Ser-3210. Zn(2+) contacts are provided by His-3245, Cys-3261, and Cys-3380. The short motif at Thr-3431–Leu-3433 is the PDZ-binding element.

This sequence in the N-terminal section; belongs to the class I-like SAM-binding methyltransferase superfamily. mRNA cap 0-1 NS5-type methyltransferase family. Homodimer; further assembles as a homotetramer. Interacts (via N-terminus) with host EXOC1 (via C-terminus); this interaction results in EXOC1 degradation through the proteasome degradation pathway. As to quaternary structure, forms heterodimers with envelope protein E in the endoplasmic reticulum and Golgi. In terms of assembly, homodimer; in the endoplasmic reticulum and Golgi. Interacts with protein prM. Interacts with non-structural protein 1. Homodimer; Homohexamer when secreted. Interacts with envelope protein E. NS1 interacts with NS4B. Interacts with host complement protein CFH; this interaction leads to the degradation of C3. As to quaternary structure, interacts (via N-terminus) with serine protease NS3. In terms of assembly, forms a heterodimer with serine protease NS3. May form homooligomers. Forms a heterodimer with NS2B. Interacts with non-structural protein 2A (via N-terminus). Interacts with NS4B. Interacts with unphosphorylated RNA-directed RNA polymerase NS5; this interaction stimulates RNA-directed RNA polymerase NS5 guanylyltransferase activity. As to quaternary structure, interacts with Serine protease/Helicase NS3. Interacts with NS1. In terms of assembly, homodimer. Interacts with host STAT2; this interaction inhibits the phosphorylation of the latter, and, when all viral proteins are present (polyprotein), targets STAT2 for degradation. Interacts with serine protease NS3. Specific enzymatic cleavages in vivo yield mature proteins. Cleavages in the lumen of endoplasmic reticulum are performed by host signal peptidase, whereas cleavages in the cytoplasmic side are performed by serine protease NS3. Signal cleavage at the 2K-4B site requires a prior NS3 protease-mediated cleavage at the 4A-2K site. In terms of processing, cleaved in post-Golgi vesicles by a host furin, releasing the mature small envelope protein M, and peptide pr. This cleavage is incomplete as up to 30% of viral particles still carry uncleaved prM. Post-translationally, N-glycosylated. N-glycosylated. The excreted form is glycosylated and this is required for efficient secretion of the protein from infected cells. In terms of processing, acetylated by host KAT5. Acetylation modulates NS3 RNA-binding and unwinding activities and plays an important positive role for viral replication. Post-translationally, phosphorylated on serines residues. This phosphorylation may trigger NS5 nuclear localization.

It localises to the virion. The protein resides in the host nucleus. It is found in the host cytoplasm. Its subcellular location is the host perinuclear region. The protein localises to the secreted. It localises to the virion membrane. The protein resides in the host endoplasmic reticulum membrane. It catalyses the reaction Selective hydrolysis of -Xaa-Xaa-|-Yaa- bonds in which each of the Xaa can be either Arg or Lys and Yaa can be either Ser or Ala.. The catalysed reaction is RNA(n) + a ribonucleoside 5'-triphosphate = RNA(n+1) + diphosphate. It carries out the reaction a ribonucleoside 5'-triphosphate + H2O = a ribonucleoside 5'-diphosphate + phosphate + H(+). The enzyme catalyses ATP + H2O = ADP + phosphate + H(+). It catalyses the reaction a 5'-end (5'-triphosphoguanosine)-ribonucleoside in mRNA + S-adenosyl-L-methionine = a 5'-end (N(7)-methyl 5'-triphosphoguanosine)-ribonucleoside in mRNA + S-adenosyl-L-homocysteine. The catalysed reaction is a 5'-end (N(7)-methyl 5'-triphosphoguanosine)-ribonucleoside in mRNA + S-adenosyl-L-methionine = a 5'-end (N(7)-methyl 5'-triphosphoguanosine)-(2'-O-methyl-ribonucleoside) in mRNA + S-adenosyl-L-homocysteine + H(+). Plays a role in virus budding by binding to the cell membrane and gathering the viral RNA into a nucleocapsid that forms the core of a mature virus particle. During virus entry, may induce genome penetration into the host cytoplasm after hemifusion induced by the surface proteins. Can migrate to the cell nucleus where it modulates host functions. Overcomes the anti-viral effects of host EXOC1 by sequestering and degrading the latter through the proteasome degradation pathway. Its function is as follows. Inhibits RNA silencing by interfering with host Dicer. Functionally, prevents premature fusion activity of envelope proteins in trans-Golgi by binding to envelope protein E at pH6.0. After virion release in extracellular space, gets dissociated from E dimers. In terms of biological role, acts as a chaperone for envelope protein E during intracellular virion assembly by masking and inactivating envelope protein E fusion peptide. prM is the only viral peptide matured by host furin in the trans-Golgi network probably to avoid catastrophic activation of the viral fusion activity in acidic Golgi compartment prior to virion release. prM-E cleavage is inefficient, and many virions are only partially matured. These uncleaved prM would play a role in immune evasion. May play a role in virus budding. Exerts cytotoxic effects by activating a mitochondrial apoptotic pathway through M ectodomain. May display a viroporin activity. Its function is as follows. Binds to host cell surface receptor and mediates fusion between viral and cellular membranes. Envelope protein is synthesized in the endoplasmic reticulum in the form of heterodimer with protein prM. They play a role in virion budding in the ER, and the newly formed immature particle is covered with 60 spikes composed of heterodimer between precursor prM and envelope protein E. The virion is transported to the Golgi apparatus where the low pH causes dissociation of PrM-E heterodimers and formation of E homodimers. prM-E cleavage is inefficient, and many virions are only partially matured. These uncleaved prM would play a role in immune evasion. Functionally, involved in immune evasion, pathogenesis and viral replication. Once cleaved off the polyprotein, is targeted to three destinations: the viral replication cycle, the plasma membrane and the extracellular compartment. Essential for viral replication. Required for formation of the replication complex and recruitment of other non-structural proteins to the ER-derived membrane structures. Excreted as a hexameric lipoparticle that plays a role against host immune response. Antagonizing the complement function. Binds to the host macrophages and dendritic cells. Inhibits signal transduction originating from Toll-like receptor 3 (TLR3). In terms of biological role, component of the viral RNA replication complex that functions in virion assembly and antagonizes the host alpha/beta interferon antiviral response. Inhibits STAT2 translocation in the nucleus after IFN-alpha treatment. Required cofactor for the serine protease function of NS3. May have membrane-destabilizing activity and form viroporins. Inhibits STAT2 translocation in the nucleus after IFN-alpha treatment. Its function is as follows. Displays three enzymatic activities: serine protease, NTPase and RNA helicase. NS3 serine protease, in association with NS2B, performs its autocleavage and cleaves the polyprotein at dibasic sites in the cytoplasm: C-prM, NS2A-NS2B, NS2B-NS3, NS3-NS4A, NS4A-2K and NS4B-NS5. NS3 RNA helicase binds RNA and unwinds dsRNA in the 3' to 5' direction. NS3 supports the separation of RNA daughter and template strands during viral replication. The helicase part is involved in the inhibition of phosphorylation of host STAT1, and thereby inhibition of host type-I IFN signaling. In addition, NS3 assists the initiation of replication by unwinding the RNA secondary structure in the 3' non-translated region (NTR). Inhibits STAT2 translocation in the nucleus after IFN-alpha treatment. Functionally, regulates the ATPase activity of the NS3 helicase activity. NS4A allows NS3 helicase to conserve energy during unwinding. Induces host ER membrane rearrangements to provide a compartment where viral replication can take part. Inhibits STAT2 translocation in the nucleus after IFN-alpha treatment. In terms of biological role, functions as a signal peptide for NS4B and is required for the interferon antagonism activity of the latter. Induces the formation of ER-derived membrane vesicles where the viral replication takes place. Inhibits interferon (IFN)-induced host STAT1 phosphorylation and nuclear translocation, thereby preventing the establishment of cellular antiviral state by blocking the IFN-alpha/beta pathway. Inhibits STAT2 translocation in the nucleus after IFN-alpha treatment. Its function is as follows. Replicates the viral (+) and (-) genome, and performs the capping of genomes in the cytoplasm. NS5 methylates viral RNA cap at guanine N-7 and ribose 2'-O positions. Besides its role in genome replication, also prevents the establishment of cellular antiviral state by blocking the interferon-alpha/beta (IFN-alpha/beta) signaling pathway. Inhibits host JAK1 and TYK2 phosphorylation, thereby preventing activation of JAK-STAT signaling pathway. May transcriptionally regulate host genes involved in antiviral response when localized in the nucleus. This Ciconiiformes (storks and others) protein is Genome polyprotein.